The chain runs to 158 residues: ATP synthase subunit b' (158 aa).

A helical membrane pass occupies residues 24–44; sequence ATLPLMAVQILVLVFLLNAVF.

The protein belongs to the ATPase B chain family. In terms of assembly, F-type ATPases have 2 components, F(1) - the catalytic core - and F(0) - the membrane proton channel. F(1) has five subunits: alpha(3), beta(3), gamma(1), delta(1), epsilon(1). F(0) has four main subunits: a(1), b(1), b'(1) and c(10-14). The alpha and beta chains form an alternating ring which encloses part of the gamma chain. F(1) is attached to F(0) by a central stalk formed by the gamma and epsilon chains, while a peripheral stalk is formed by the delta, b and b' chains.

It is found in the cellular thylakoid membrane. F(1)F(0) ATP synthase produces ATP from ADP in the presence of a proton or sodium gradient. F-type ATPases consist of two structural domains, F(1) containing the extramembraneous catalytic core and F(0) containing the membrane proton channel, linked together by a central stalk and a peripheral stalk. During catalysis, ATP synthesis in the catalytic domain of F(1) is coupled via a rotary mechanism of the central stalk subunits to proton translocation. Functionally, component of the F(0) channel, it forms part of the peripheral stalk, linking F(1) to F(0). The b'-subunit is a diverged and duplicated form of b found in plants and photosynthetic bacteria. The chain is ATP synthase subunit b' from Synechococcus elongatus (strain ATCC 33912 / PCC 7942 / FACHB-805) (Anacystis nidulans R2).